A 1053-amino-acid chain; its full sequence is Phosphoenolpyruvate carboxylase (1053 aa).

His246 is an active-site residue. The segment covering 461-473 (RNTRLQQQQEKDP) has biased composition (basic and acidic residues). The disordered stretch occupies residues 461–480 (RNTRLQQQQEKDPTTPLPEY). Residue Lys699 is part of the active site.

This sequence belongs to the PEPCase type 1 family. Mg(2+) serves as cofactor.

The enzyme catalyses oxaloacetate + phosphate = phosphoenolpyruvate + hydrogencarbonate. Forms oxaloacetate, a four-carbon dicarboxylic acid source for the tricarboxylic acid cycle. In Synechococcus sp. (strain ATCC 27144 / PCC 6301 / SAUG 1402/1) (Anacystis nidulans), this protein is Phosphoenolpyruvate carboxylase (ppc).